A 323-amino-acid polypeptide reads, in one-letter code: tRNA U34 carboxymethyltransferase (323 aa).

Residues Lys-91, Trp-105, Lys-110, Gly-130, 152 to 154, 181 to 182, Met-196, Tyr-200, and Arg-315 contribute to the carboxy-S-adenosyl-L-methionine site; these read DPT and IE.

It belongs to the class I-like SAM-binding methyltransferase superfamily. CmoB family. As to quaternary structure, homotetramer.

The enzyme catalyses carboxy-S-adenosyl-L-methionine + 5-hydroxyuridine(34) in tRNA = 5-carboxymethoxyuridine(34) in tRNA + S-adenosyl-L-homocysteine + H(+). Functionally, catalyzes carboxymethyl transfer from carboxy-S-adenosyl-L-methionine (Cx-SAM) to 5-hydroxyuridine (ho5U) to form 5-carboxymethoxyuridine (cmo5U) at position 34 in tRNAs. The polypeptide is tRNA U34 carboxymethyltransferase (Shigella boydii serotype 18 (strain CDC 3083-94 / BS512)).